Reading from the N-terminus, the 260-residue chain is Late transcription factor 1 (260 aa).

Belongs to the chordopoxvirinae VLTF-1 family. Interacts with the late transcription factors VLTF-2 and VLTF-3. Interacts with the late transcription elongation factor VLTF-4. Interacts with itself.

In terms of biological role, associates with RNA polymerase to initiate transcription from late gene promoters. This chain is Late transcription factor 1 (OPG093), found in Homo sapiens (Human).